Here is a 119-residue protein sequence, read N- to C-terminus: Large ribosomal subunit protein bL20 (119 aa).

Belongs to the bacterial ribosomal protein bL20 family.

Functionally, binds directly to 23S ribosomal RNA and is necessary for the in vitro assembly process of the 50S ribosomal subunit. It is not involved in the protein synthesizing functions of that subunit. In Chloroflexus aggregans (strain MD-66 / DSM 9485), this protein is Large ribosomal subunit protein bL20.